Consider the following 234-residue polypeptide: MSKHGFGYYATEANEYTIPLDDIDDGRSDTDAKTLGSVLTQLSEEVDWDDAVDYATMSSYLGDYVFTIPNSYDIHPKFTRYVVLFGLSTFVLRPSCCLIFLFYAIYAQDNRFLILGTTITAFFYGTLMLEMYYMYANIKYDLMPLSKFQQVLIGALSMLGPIIFVAISYNMIFKDVTFMKKILAFDTNLKTSGFVIYLVMIASLAYSITSISDAIGFLLPRLWTRAVLKSCVPF.

The next 4 helical transmembrane spans lie at 82–102 (VVLFGLSTFVLRPSCCLIFLF), 112–132 (FLILGTTITAFFYGTLMLEMY), 153–173 (IGALSMLGPIIFVAISYNMIF), and 191–211 (TSGFVIYLVMIASLAYSITSI).

This sequence belongs to the alphaherpesvirinae UL20 family. As to quaternary structure, interacts with gK (via N-terminus); this interaction plays a role in the coordinate transport of UL20 and gK to the trans-Golgi network (TGN), and is required for their cell surface expression. Interacts with gB.

It localises to the virion. Its subcellular location is the host cell membrane. The protein localises to the host endosome membrane. It is found in the host Golgi apparatus membrane. The protein resides in the host nucleus membrane. Functionally, plays an essential role in egress of virus particles from the nucleus, cytoplasmic envelopment and virus-induced cell fusion. Forms a functional protein complex with gK and this interaction is absolutely essential for their coordinate intracellular transport, gK glycosylation, expression on host cell surface, and function. Together, they modulate gB-mediated virus-induced cell fusion and virion egress and therefore actively participate in these processes. This chain is Protein UL20 homolog (MDV032), found in Gallid herpesvirus 2 (strain Chicken/Md5/ATCC VR-987) (GaHV-2).